The chain runs to 556 residues: 2-succinyl-5-enolpyruvyl-6-hydroxy-3-cyclohexene-1-carboxylate synthase (556 aa).

The protein belongs to the TPP enzyme family. MenD subfamily. As to quaternary structure, homodimer. Requires Mg(2+) as cofactor. Mn(2+) is required as a cofactor. Thiamine diphosphate serves as cofactor.

The catalysed reaction is isochorismate + 2-oxoglutarate + H(+) = 5-enolpyruvoyl-6-hydroxy-2-succinyl-cyclohex-3-ene-1-carboxylate + CO2. It participates in quinol/quinone metabolism; 1,4-dihydroxy-2-naphthoate biosynthesis; 1,4-dihydroxy-2-naphthoate from chorismate: step 2/7. Its pathway is quinol/quinone metabolism; menaquinone biosynthesis. Catalyzes the thiamine diphosphate-dependent decarboxylation of 2-oxoglutarate and the subsequent addition of the resulting succinic semialdehyde-thiamine pyrophosphate anion to isochorismate to yield 2-succinyl-5-enolpyruvyl-6-hydroxy-3-cyclohexene-1-carboxylate (SEPHCHC). The chain is 2-succinyl-5-enolpyruvyl-6-hydroxy-3-cyclohexene-1-carboxylate synthase from Mycobacterium leprae (strain Br4923).